The chain runs to 437 residues: Elongation factor 1-gamma (437 aa).

A2 is subject to N-acetylalanine. The region spanning 2-87 (AAGTLYTYPE…YVSNEELRGS (86 aa)) is the GST N-terminal domain. In terms of domain architecture, GST C-terminal spans 88 to 216 (TPEAAAQVVQ…VKLCEKMAQF (129 aa)). N6-acetyllysine occurs at positions 147 and 212. Residues 221–254 (FAESQPKKDTPRKEKGSREEKQKPQAERKEEKKA) are compositionally biased toward basic and acidic residues. The tract at residues 221–268 (FAESQPKKDTPRKEKGSREEKQKPQAERKEEKKAAAPAPEEEMDECEQ) is disordered. A Glycyl lysine isopeptide (Lys-Gly) (interchain with G-Cter in SUMO1) cross-link involves residue K253. The 162-residue stretch at 276–437 (AKDPFAHLPK…KAVNQGKIFK (162 aa)) folds into the EF-1-gamma C-terminal domain. Residue K285 forms a Glycyl lysine isopeptide (Lys-Gly) (interchain with G-Cter in SUMO2) linkage. At K401 the chain carries N6-acetyllysine. Residue K434 is modified to N6-acetyllysine; alternate. Position 434 is an N6-malonyllysine; alternate (K434).

In terms of assembly, EF-1 is composed of four subunits: alpha, beta, delta, and gamma.

Functionally, probably plays a role in anchoring the complex to other cellular components. The chain is Elongation factor 1-gamma (Eef1g) from Mus musculus (Mouse).